The chain runs to 859 residues: Leucine--tRNA ligase (859 aa).

Residues proline 42–histidine 52 carry the 'HIGH' region motif. The short motif at lysine 618–serine 622 is the 'KMSKS' region element. Lysine 621 provides a ligand contact to ATP.

Belongs to the class-I aminoacyl-tRNA synthetase family.

The protein localises to the cytoplasm. It catalyses the reaction tRNA(Leu) + L-leucine + ATP = L-leucyl-tRNA(Leu) + AMP + diphosphate. The polypeptide is Leucine--tRNA ligase (Shewanella oneidensis (strain ATCC 700550 / JCM 31522 / CIP 106686 / LMG 19005 / NCIMB 14063 / MR-1)).